The chain runs to 4563 residues: Apolipoprotein B-100 (4563 aa).

Positions 1–27 (MDPPRPALLALLALPALLLLLLAGARA) are cleaved as a signal peptide. The interval 32 to 126 (LENVSLVCPK…KNSEEFAAAM (95 aa)) is heparin-binding. The N-linked (GlcNAc...) asparagine glycan is linked to Asn-34. 2 disulfide bridges follow: Cys-39/Cys-88 and Cys-78/Cys-97. Residues 46 to 672 (FKHLRKYTYN…PNNYLPKESM (627 aa)) form the Vitellogenin domain. Asn-185 is a glycosylation site (N-linked (GlcNAc...) asparagine). 4 disulfides stabilise this stretch: Cys-186–Cys-212, Cys-245–Cys-261, Cys-385–Cys-390, and Cys-478–Cys-513. The interval 232–306 (TRPLSTLISS…RFFGEGTKKM (75 aa)) is heparin-binding. The heparin-binding stretch occupies residues 902–959 (NTNFFHESGLEAHVALKAGKLKFIIPSPKRPVKLLSGGNTLHLVSTTKTEVIPPLIEN). Residues Cys-966 and Cys-976 are joined by a disulfide bond. Asn-983 is a glycosylation site (N-linked (GlcNAc...) asparagine). Residue Cys-1112 is the site of S-palmitoyl cysteine attachment. 3 N-linked (GlcNAc...) asparagine glycosylation sites follow: Asn-1368, Asn-1377, and Asn-1523. N6-acetyllysine is present on Lys-2004. The heparin-binding stretch occupies residues 2043–2178 (RDAVEKPQEF…EKLSQLQTYM (136 aa)). Residues Asn-2239, Asn-2560, Asn-2779, Asn-2982, and Asn-3101 are each glycosylated (N-linked (GlcNAc...) asparagine). Positions 3161 to 3236 (FLKTTKQSFD…KIKFDKYKAE (76 aa)) are heparin-binding. A basic (possible receptor binding region) region spans residues 3174-3184 (KAQYKKNKHRH). Cysteines 3194 and 3324 form a disulfide. N-linked (GlcNAc...) asparagine glycosylation is present at Asn-3224. Residue Ser-3279 is modified to Phosphoserine. 2 N-linked (GlcNAc...) asparagine glycosylation sites follow: Asn-3336 and Asn-3358. Residues 3373 to 3393 (VIDALQYKLEGTTRLTRKRGL) form an LDL receptor binding region. Residues 3383–3516 (GTTRLTRKRG…REYSGTIASE (134 aa)) form a heparin-binding region. Residues 3386-3394 (RLTRKRGLK) form a basic (possible receptor binding region) region. 3 N-linked (GlcNAc...) asparagine glycosylation sites follow: Asn-3411, Asn-3465, and Asn-3895. Ser-4048 carries the phosphoserine; by FAM20C modification. The residue at position 4052 (Thr-4052) is a Phosphothreonine. Asn-4237 and Asn-4431 each carry an N-linked (GlcNAc...) asparagine glycan.

Interacts with PCSK9. Interacts with MTTP. Interacts with AUP1. Interacts with CIDEB. In terms of processing, palmitoylated; structural requirement for proper assembly of the hydrophobic core of the lipoprotein particle.

The protein localises to the cytoplasm. Its subcellular location is the secreted. It is found in the lipid droplet. Its function is as follows. Apolipoprotein B is a major protein constituent of chylomicrons (apo B-48), LDL (apo B-100) and VLDL (apo B-100). Apo B-100 functions as a recognition signal for the cellular binding and internalization of LDL particles by the apoB/E receptor. The sequence is that of Apolipoprotein B-100 (APOB) from Homo sapiens (Human).